Reading from the N-terminus, the 620-residue chain is Kelch-like protein 32 (620 aa).

The BTB domain maps to 42–109 (CDITLIAEEQ…AYTGQILLEP (68 aa)). 6 Kelch repeats span residues 290-346 (TLYI…VMGD), 347-398 (FLFV…AMEE), 399-446 (YLYA…VADG), 447-494 (LLWI…AVQR), 496-547 (LYVL…VHNG), and 549-599 (IYLV…FLPA).

The sequence is that of Kelch-like protein 32 (KLHL32) from Homo sapiens (Human).